We begin with the raw amino-acid sequence, 620 residues long: Probable potassium transport system protein Kup (620 aa).

The next 12 helical transmembrane spans lie at 11 to 31, 51 to 71, 100 to 120, 138 to 158, 167 to 187, 202 to 222, 246 to 266, 288 to 308, 334 to 354, 364 to 384, 396 to 416, and 418 to 438; these read LAFL…LYAF, ILSL…LLLV, IAML…VITP, LAPY…AVQA, FFAP…AHAI, AVHF…LVVL, WFAL…AYLL, LILL…SGIF, GQIY…FVML, AAYG…LVLV, VVTI…STST, and LMEG…VMYI.

It belongs to the HAK/KUP transporter (TC 2.A.72) family.

It localises to the cell inner membrane. It carries out the reaction K(+)(in) + H(+)(in) = K(+)(out) + H(+)(out). Its function is as follows. Transport of potassium into the cell. Likely operates as a K(+):H(+) symporter. In Vibrio cholerae serotype O1 (strain ATCC 39541 / Classical Ogawa 395 / O395), this protein is Probable potassium transport system protein Kup.